Here is a 198-residue protein sequence, read N- to C-terminus: TATA-box-binding protein (198 aa).

Repeat copies occupy residues 14-90 (IENI…IKTL) and 105-181 (IQNI…FDKL).

The protein belongs to the TBP family.

General factor that plays a role in the activation of archaeal genes transcribed by RNA polymerase. Binds specifically to the TATA box promoter element which lies close to the position of transcription initiation. The polypeptide is TATA-box-binding protein (tbp) (Saccharolobus solfataricus (strain ATCC 35092 / DSM 1617 / JCM 11322 / P2) (Sulfolobus solfataricus)).